Consider the following 126-residue polypeptide: MKMILAVAAGGGLGAVARYLTGVGLGHWLGTAYPWATMTVNVTGSFAMGVLAGLGAHVWQPAPELRAFLMVGVLGGFTTFSSFSLDVALLVERGAIGAAAAYVAASFLLSVGGLFAGLALIRTAVA.

Transmembrane regions (helical) follow at residues 3 to 23, 39 to 59, 71 to 91, and 101 to 121; these read MILA…LTGV, TVNV…AHVW, VGVL…ALLV, and AYVA…LALI. Glycine 75 and threonine 78 together coordinate Na(+).

This sequence belongs to the fluoride channel Fluc/FEX (TC 1.A.43) family.

It localises to the cell inner membrane. The enzyme catalyses fluoride(in) = fluoride(out). Na(+) is not transported, but it plays an essential structural role and its presence is essential for fluoride channel function. In terms of biological role, fluoride-specific ion channel. Important for reducing fluoride concentration in the cell, thus reducing its toxicity. In Rhodospirillum centenum (strain ATCC 51521 / SW), this protein is Fluoride-specific ion channel FluC.